Reading from the N-terminus, the 306-residue chain is Anamorsin (306 aa).

The segment at 6–172 (IAPGQRVAVI…KPNFEVGSSS (167 aa)) is N-terminal SAM-like domain. A linker region spans residues 173–224 (QLKLSFAKKTSPSGKPSVDPATAKLWTLSASDMNDEEMDLLDSDELLDSEDL). [2Fe-2S] cluster-binding residues include Cys-237, Cys-246, Cys-249, and Cys-251. Residues 237 to 251 (CKEKGKKKACKNCTC) are fe-S binding site A. The [4Fe-4S] cluster site is built by Cys-270, Cys-273, Cys-281, and Cys-284. Short sequence motifs (cx2C motif) lie at residues 270–273 (CGNC) and 281–284 (CASC). Residues 270-284 (CGNCYLGDAFRCASC) form a fe-S binding site B region.

Belongs to the anamorsin family. As to quaternary structure, monomer. Interacts with NDOR1. Interacts with CHCHD4. [2Fe-2S] cluster serves as cofactor. The cofactor is [4Fe-4S] cluster.

It localises to the cytoplasm. It is found in the nucleus. Its subcellular location is the mitochondrion intermembrane space. Component of the cytosolic iron-sulfur (Fe-S) protein assembly (CIA) machinery required for the maturation of extramitochondrial Fe-S proteins. Part of an electron transfer chain functioning in an early step of cytosolic Fe-S biogenesis, facilitating the de novo assembly of a [4Fe-4S] cluster on the scaffold complex NUBP1-NUBP2. Electrons are transferred to CIAPIN1 from NADPH via the FAD- and FMN-containing protein NDOR1. NDOR1-CIAPIN1 are also required for the assembly of the diferric tyrosyl radical cofactor of ribonucleotide reductase (RNR), probably by providing electrons for reduction during radical cofactor maturation in the catalytic small subunit. Has anti-apoptotic effects in the cell. Involved in negative control of cell death upon cytokine withdrawal. Promotes development of hematopoietic cells. This chain is Anamorsin, found in Gallus gallus (Chicken).